The primary structure comprises 190 residues: Hypoxanthine/guanine phosphoribosyltransferase (190 aa).

Belongs to the purine/pyrimidine phosphoribosyltransferase family. Archaeal HPRT subfamily. Homodimer.

It localises to the cytoplasm. It catalyses the reaction IMP + diphosphate = hypoxanthine + 5-phospho-alpha-D-ribose 1-diphosphate. The catalysed reaction is GMP + diphosphate = guanine + 5-phospho-alpha-D-ribose 1-diphosphate. It participates in purine metabolism; IMP biosynthesis via salvage pathway; IMP from hypoxanthine: step 1/1. Catalyzes a salvage reaction resulting in the formation of IMP that is energically less costly than de novo synthesis. The chain is Hypoxanthine/guanine phosphoribosyltransferase from Methanosalsum zhilinae (strain DSM 4017 / NBRC 107636 / OCM 62 / WeN5) (Methanohalophilus zhilinae).